We begin with the raw amino-acid sequence, 212 residues long: SOSS complex subunit B1 (212 aa).

A DNA-binding region (OB) is located at residues 22-92 (IVLETGRVTK…TLYTGRGGDL (71 aa)). The segment at 110-212 (EPNPEYNTQQ…GKETRRSSKR (103 aa)) is disordered. Positions 114–130 (EYNTQQAPNKSVQNNDN) are enriched in polar residues. The residue at position 117 (Thr-117) is a Phosphothreonine; by ATM. A compositionally biased stretch (low complexity) spans 131 to 148 (SPTAPQATTGPPAASPAS). Positions 149-160 (ENQNGNGLSTQL) are enriched in polar residues. The segment covering 166 to 178 (PHPSHTPSHPPST) has biased composition (low complexity).

Belongs to the SOSS-B family. SOSS-B1 subfamily. As to quaternary structure, component of the SOSS complex, composed of SOSS-B (SOSS-B1/NABP2 or SOSS-B2/NABP1), SOSS-A/INTS3 and SOSS-C/INIP. SOSS complexes containing SOSS-B1/NABP2 are more abundant than complexes containing SOSS-B2/NABP1. Directly interacts with ATM, SOSS-A/INTS3 and RAD51. Interacts with INTS7. In terms of processing, phosphorylated by ATM in response to DNA damage. Phosphorylation prevents degradation by the proteasome, hence stabilization of the protein and accumulation within cells. Ubiquitinated in a FBXL5-dependent manner, leading to proteasomal degradation.

It is found in the nucleus. Its function is as follows. Component of the SOSS complex, a multiprotein complex that functions downstream of the MRN complex to promote DNA repair and G2/M checkpoint. In the SOSS complex, acts as a sensor of single-stranded DNA that binds to single-stranded DNA, in particular to polypyrimidines. The SOSS complex associates with DNA lesions and influences diverse endpoints in the cellular DNA damage response including cell-cycle checkpoint activation, recombinational repair and maintenance of genomic stability. Required for efficient homologous recombination-dependent repair of double-strand breaks (DSBs) and ATM-dependent signaling pathways. The polypeptide is SOSS complex subunit B1 (Nabp2) (Mus musculus (Mouse)).